The following is a 442-amino-acid chain: Choline monooxygenase, chloroplastic (442 aa).

Residues 1-58 (MASSASMLINYPTTFCGVRNSSNPNNDQFSDQINIPSSLNNNINISKITSKTNKIIPK) constitute a chloroplast transit peptide. One can recognise a Rieske domain in the interval 123 to 229 (WQVAGYSDQI…VAIWGPFVLI (107 aa)). Residues Cys165, His167, Cys184, and His187 each contribute to the [2Fe-2S] cluster site. 2 residues coordinate Fe cation: His290 and His295.

Belongs to the choline monooxygenase family. [2Fe-2S] cluster is required as a cofactor. Fe cation serves as cofactor. It depends on Mg(2+) as a cofactor.

The protein localises to the plastid. It is found in the chloroplast stroma. The catalysed reaction is choline + 2 reduced [2Fe-2S]-[ferredoxin] + O2 + 2 H(+) = betaine aldehyde hydrate + 2 oxidized [2Fe-2S]-[ferredoxin] + H2O. Its pathway is amine and polyamine biosynthesis; betaine biosynthesis via choline pathway; betaine aldehyde from choline (monooxygenase route): step 1/1. In terms of biological role, catalyzes the first step of the osmoprotectant glycine betaine synthesis. In Amaranthus tricolor (Joseph's coat), this protein is Choline monooxygenase, chloroplastic (CMO).